The sequence spans 311 residues: Ribosomal RNA small subunit methyltransferase H (311 aa).

S-adenosyl-L-methionine is bound by residues 32–34 (AGH), aspartate 52, phenylalanine 79, aspartate 100, and glutamine 107.

Belongs to the methyltransferase superfamily. RsmH family.

Its subcellular location is the cytoplasm. It carries out the reaction cytidine(1402) in 16S rRNA + S-adenosyl-L-methionine = N(4)-methylcytidine(1402) in 16S rRNA + S-adenosyl-L-homocysteine + H(+). In terms of biological role, specifically methylates the N4 position of cytidine in position 1402 (C1402) of 16S rRNA. The polypeptide is Ribosomal RNA small subunit methyltransferase H (Staphylococcus aureus (strain Mu3 / ATCC 700698)).